A 292-amino-acid chain; its full sequence is Homoserine kinase (292 aa).

An ATP-binding site is contributed by 84-94 (PLSRGLGSSSA).

It belongs to the GHMP kinase family. Homoserine kinase subfamily.

It is found in the cytoplasm. The catalysed reaction is L-homoserine + ATP = O-phospho-L-homoserine + ADP + H(+). It functions in the pathway amino-acid biosynthesis; L-threonine biosynthesis; L-threonine from L-aspartate: step 4/5. Functionally, catalyzes the ATP-dependent phosphorylation of L-homoserine to L-homoserine phosphate. This Campylobacter jejuni subsp. jejuni serotype O:23/36 (strain 81-176) protein is Homoserine kinase.